The sequence spans 328 residues: L-lactate dehydrogenase (328 aa).

NAD(+) is bound by residues Val-18, Glu-39, Lys-46, Tyr-71, and 85 to 86; that span reads GA. Positions 88 and 94 each coordinate substrate. NAD(+)-binding positions include Ser-107, 124 to 126, and Ser-149; that span reads AAN. 126–129 is a binding site for substrate; that stretch reads NPVD. Residue 154–157 participates in substrate binding; it reads DSAR. Positions 159 and 174 each coordinate beta-D-fructose 1,6-bisphosphate. His-181 acts as the Proton acceptor in catalysis. A Phosphotyrosine modification is found at Tyr-226. Thr-235 is a substrate binding site.

The protein belongs to the LDH/MDH superfamily. LDH family. In terms of assembly, homotetramer.

The protein resides in the cytoplasm. The catalysed reaction is (S)-lactate + NAD(+) = pyruvate + NADH + H(+). The protein operates within fermentation; pyruvate fermentation to lactate; (S)-lactate from pyruvate: step 1/1. Its activity is regulated as follows. Allosterically activated by fructose 1,6-bisphosphate (FBP). Its function is as follows. Catalyzes the conversion of lactate to pyruvate. The polypeptide is L-lactate dehydrogenase (Streptococcus thermophilus (strain ATCC BAA-250 / LMG 18311)).